The following is a 317-amino-acid chain: Large ribosomal subunit protein uL10z (317 aa).

Belongs to the universal ribosomal protein uL10 family. P0 forms a pentameric complex by interaction with dimers of P1 and P2. In terms of processing, phosphorylated.

Functionally, ribosomal protein P0 is the functional equivalent of E.coli protein L10. This Arabidopsis thaliana (Mouse-ear cress) protein is Large ribosomal subunit protein uL10z (RPP0A).